The sequence spans 324 residues: Kelch domain-containing protein PF0436 (324 aa).

3 Kelch repeats span residues Glu112 to Gly160, Gly254 to Arg301, and Ile303 to Lys323.

The polypeptide is Kelch domain-containing protein PF0436 (Pyrococcus furiosus (strain ATCC 43587 / DSM 3638 / JCM 8422 / Vc1)).